The primary structure comprises 254 residues: MIALLSPAKTLDLTKPNLNIETSKPIFISEAEVIMNNLKELEIQDLCPLMKISEDLGVQTFTKIQDWNTIYYGDEKPFVLSFKGEAYRGLDADDFTKEDLEFCNDSLRILSGLYGALKPLDGTKAYRLEMGTKISIDGSKNLYDFWGNKIMEAVLKDLENHKEKVIINLASNEYYKSIKKIDKKVRVITPVFKERKGIEYKVVTVYAKKARGQMVRYITKNRITKSEDIKNFDLDGYEFNERLSEGDTWVFTRD.

Belongs to the UPF0246 family.

This is UPF0246 protein CPE2152 from Clostridium perfringens (strain 13 / Type A).